A 345-amino-acid chain; its full sequence is Twinfilin (345 aa).

2 consecutive ADF-H domains span residues 4–139 and 177–312; these read QTGI…KHKR and GISC…DELH. Positions 320-345 are disordered; it reads PAFAKPKGPPNRGAKRLTRPSNEDQV.

It belongs to the actin-binding proteins ADF family. Twinfilin subfamily. As to quaternary structure, interacts with G-actin; ADP-actin form.

The protein resides in the cytoplasm. The protein localises to the cytoskeleton. It is found in the cell cortex. Actin-binding protein involved in motile and morphological processes. Inhibits actin polymerization, likely by sequestering G-actin. In Drosophila pseudoobscura pseudoobscura (Fruit fly), this protein is Twinfilin (twf).